The following is a 405-amino-acid chain: Metallophosphoesterase 1 (405 aa).

The chain crosses the membrane as a helical span at residues 31–51 (IFGSILLVFFFCEFLVYYLVI). The a divalent metal cation site is built by D78, D120, N158, H261, H315, and H317. Residues 369 to 389 (IIYIYCTASVLLTGYVLACLW) form a helical membrane-spanning segment.

Belongs to the metallophosphoesterase superfamily. MPPE1 family. Mn(2+) serves as cofactor.

The protein resides in the endoplasmic reticulum-Golgi intermediate compartment membrane. Functionally, metallophosphoesterase that catalyzes the removal of a side-chain ethanolamine-phosphate (EtNP) from the second mannose of the GPI-anchor protein intermediate. Participates in the glycan remodeling steps of GPI-anchor maturation to allow an efficient transport of GPI-anchor proteins from the endoplasmic reticulum to the Golgi. This is Metallophosphoesterase 1 from Xenopus laevis (African clawed frog).